The sequence spans 236 residues: uncharacterized protein (236 aa).

An N-terminal signal peptide occupies residues 1–22; it reads MEFKMQKIILGMLVVTASNAMA.

This is an uncharacterized protein from Pasteurella multocida (strain Pm70).